Consider the following 184-residue polypeptide: Ribosome-recycling factor (184 aa).

This sequence belongs to the RRF family.

It localises to the cytoplasm. Its function is as follows. Responsible for the release of ribosomes from messenger RNA at the termination of protein biosynthesis. May increase the efficiency of translation by recycling ribosomes from one round of translation to another. In Caldicellulosiruptor bescii (strain ATCC BAA-1888 / DSM 6725 / KCTC 15123 / Z-1320) (Anaerocellum thermophilum), this protein is Ribosome-recycling factor.